The chain runs to 59 residues: Temperature acclimation protein A (59 aa).

Residues F1 to V55 form the CSD domain.

It localises to the cytoplasm. In terms of biological role, affects cell viability at low temperatures. This Pseudomonas fragi protein is Temperature acclimation protein A (tapA).